An 897-amino-acid polypeptide reads, in one-letter code: Protein translocase subunit SecA (897 aa).

ATP contacts are provided by residues glutamine 89, 107–111 (GEGKT), and aspartate 517. The segment covering 839–856 (DDAQATHSNPNEQTKQAS) has biased composition (polar residues). The interval 839 to 897 (DDAQATHSNPNEQTKQASITNNIQTQTDQQNTYQRKEKKVGRNEPCPCGSGKKYKKCHG) is disordered. The segment covering 857-870 (ITNNIQTQTDQQNT) has biased composition (low complexity). Cysteine 884, cysteine 886, cysteine 895, and histidine 896 together coordinate Zn(2+).

Belongs to the SecA family. In terms of assembly, monomer and homodimer. Part of the essential Sec protein translocation apparatus which comprises SecA, SecYEG and auxiliary proteins SecDF-YajC and YidC. Requires Zn(2+) as cofactor.

It localises to the cell inner membrane. Its subcellular location is the cytoplasm. It catalyses the reaction ATP + H2O + cellular proteinSide 1 = ADP + phosphate + cellular proteinSide 2.. Functionally, part of the Sec protein translocase complex. Interacts with the SecYEG preprotein conducting channel. Has a central role in coupling the hydrolysis of ATP to the transfer of proteins into and across the cell membrane, serving as an ATP-driven molecular motor driving the stepwise translocation of polypeptide chains across the membrane. The sequence is that of Protein translocase subunit SecA from Vesicomyosocius okutanii subsp. Calyptogena okutanii (strain HA).